The sequence spans 221 residues: Large ribosomal subunit protein uL16A (221 aa).

The protein belongs to the universal ribosomal protein uL16 family. In terms of assembly, component of the large ribosomal subunit (LSU). Mature yeast ribosomes consist of a small (40S) and a large (60S) subunit. The 40S small subunit contains 1 molecule of ribosomal RNA (18S rRNA) and at least 33 different proteins. The large 60S subunit contains 3 rRNA molecules (25S, 5.8S and 5S rRNA) and at least 46 different proteins.

It is found in the cytoplasm. Functionally, component of the ribosome, a large ribonucleoprotein complex responsible for the synthesis of proteins in the cell. The small ribosomal subunit (SSU) binds messenger RNAs (mRNAs) and translates the encoded message by selecting cognate aminoacyl-transfer RNA (tRNA) molecules. The large subunit (LSU) contains the ribosomal catalytic site termed the peptidyl transferase center (PTC), which catalyzes the formation of peptide bonds, thereby polymerizing the amino acids delivered by tRNAs into a polypeptide chain. The nascent polypeptides leave the ribosome through a tunnel in the LSU and interact with protein factors that function in enzymatic processing, targeting, and the membrane insertion of nascent chains at the exit of the ribosomal tunnel. The chain is Large ribosomal subunit protein uL16A (rpl1001) from Schizosaccharomyces pombe (strain 972 / ATCC 24843) (Fission yeast).